We begin with the raw amino-acid sequence, 276 residues long: O-methyltransferase cnsE (276 aa).

S-adenosyl-L-methionine is bound by residues Q110, 133 to 134, and H155; that span reads DA.

It belongs to the methyltransferase superfamily. Requires S-adenosyl-L-methionine as cofactor.

It functions in the pathway alkaloid biosynthesis. Functionally, O-methyltransferase; part of the gene cluster that mediates the biosynthesis of communesins, a prominent class of indole alkaloids with great potential as pharmaceuticals. Communesins are biosynthesized by the coupling of tryptamine and aurantioclavine, two building blocks derived from L-tryptophan. The L-tryptophan decarboxylase cnsB converts L-tryptophan to tryptamine, whereas the tryptophan dimethylallyltransferase cnsF converts L-tryptophan to 4-dimethylallyl tryptophan which is further transformed to aurantioclavine by the aurantioclavine synthase cnsA, probably aided by the catalase cnsD. The cytochrome P450 monooxygenase cnsC catalyzes the heterodimeric coupling between the two different indole moieties, tryptamine and aurantioclavine, to construct vicinal quaternary stereocenters and yield the heptacyclic communesin scaffold. The O-methyltransferase cnsE then methylates the communesin scaffold to produce communesin K, the simplest characterized communesin that contains the heptacyclic core. The dioxygenase cnsJ converts communesin K into communesin I. Acylation to introduce the hexadienyl group at position N16 of communesin I by the acyltransferase cnsK leads to the production of communesin B. The hexadienyl group is produced by the highly reducing polyketide synthase cnsI, before being hydrolytically removed from cnsI by the serine hydrolase cnsH, converted into hexadienyl-CoA by the CoA ligase cnsG, and then transferred to communesin I by cnsK. Surprisingly, cnsK may also be a promiscuous acyltransferase that can tolerate a range of acyl groups, including acetyl-, propionyl-, and butyryl-CoA, which lead to communesins A, G and H respectively. The roles of the alpha-ketoglutarate-dependent dioxygenases cnsM and cnsP have still to be determined. The protein is O-methyltransferase cnsE of Penicillium expansum (Blue mold rot fungus).